The sequence spans 429 residues: Gamma-glutamyl phosphate reductase (429 aa).

The protein belongs to the gamma-glutamyl phosphate reductase family.

It is found in the cytoplasm. The catalysed reaction is L-glutamate 5-semialdehyde + phosphate + NADP(+) = L-glutamyl 5-phosphate + NADPH + H(+). The protein operates within amino-acid biosynthesis; L-proline biosynthesis; L-glutamate 5-semialdehyde from L-glutamate: step 2/2. Catalyzes the NADPH-dependent reduction of L-glutamate 5-phosphate into L-glutamate 5-semialdehyde and phosphate. The product spontaneously undergoes cyclization to form 1-pyrroline-5-carboxylate. In Methylocella silvestris (strain DSM 15510 / CIP 108128 / LMG 27833 / NCIMB 13906 / BL2), this protein is Gamma-glutamyl phosphate reductase.